A 520-amino-acid chain; its full sequence is Cytochrome P450 1A1 (520 aa).

Residue Phe230 coordinates substrate. Cys464 contributes to the heme binding site.

The protein belongs to the cytochrome P450 family. Heme is required as a cofactor.

It is found in the endoplasmic reticulum membrane. The protein localises to the microsome membrane. The catalysed reaction is an organic molecule + reduced [NADPH--hemoprotein reductase] + O2 = an alcohol + oxidized [NADPH--hemoprotein reductase] + H2O + H(+). In terms of biological role, cytochromes P450 are a group of heme-thiolate monooxygenases. In liver microsomes, this enzyme is involved in an NADPH-dependent electron transport pathway. It oxidizes a variety of structurally unrelated compounds, including steroids, fatty acids, and xenobiotics. The protein is Cytochrome P450 1A1 (cyp1a1) of Dicentrarchus labrax (European seabass).